The sequence spans 409 residues: MSKKVQKVVLAYSGGLDTSIILKWLQTTYGAEVVTFTADLGQGEELEPARRKAQLLGIKDENIFIEDLREEFVRDYVFPMFRANAVYEGQYLLGTSIARPLIAKKQIEIAEKVGADAVAHGATGKGNDQVRFELGYYALKPDITIIAPWREWDLRSREQLIAFAEQHQIPIAKDKRGEAPFSVDANLLHASSEGKVLEDPAQEVPDYVYSRTIDPEAAPDQPTYITIDFEQGDAVAIDGGKMSPATLLAKLNELGRANGIGRLDLVENRFVGMKSRGMYETPGGAILLVAHRGIEQITLDRGAAHLKDELMPKYAELVYNGFWFSPEREMLQAAIDQSQRYVTGQVRLKLYKGNVILVGRDSAYSLYDQDLVTFEEGAVAYDHRDAAGFIKLNALRLRTLGQRRKKLGL.

ATP contacts are provided by residues 11 to 19 (AYSGGLDTS) and Ala38. L-citrulline-binding residues include Tyr91 and Ser96. Gly121 is an ATP binding site. L-aspartate contacts are provided by Thr123, Asn127, and Asp128. Asn127 lines the L-citrulline pocket. Positions 131, 182, 191, 267, and 279 each coordinate L-citrulline.

Belongs to the argininosuccinate synthase family. Type 1 subfamily. As to quaternary structure, homotetramer.

The protein localises to the cytoplasm. It carries out the reaction L-citrulline + L-aspartate + ATP = 2-(N(omega)-L-arginino)succinate + AMP + diphosphate + H(+). The protein operates within amino-acid biosynthesis; L-arginine biosynthesis; L-arginine from L-ornithine and carbamoyl phosphate: step 2/3. This chain is Argininosuccinate synthase, found in Nitrobacter winogradskyi (strain ATCC 25391 / DSM 10237 / CIP 104748 / NCIMB 11846 / Nb-255).